The primary structure comprises 505 residues: MTHPSDTGSAPVLALRDVSKSFGAVRALRDVSLELFPGEVHALAGENGAGKSTLIKTLAGVHRPDAGHVLLDGAPVVFHGPGDARDAGIAVIYQEPTLFPDLSIAENIFMGRQPRRALGRIDHKATHDATAALMLRLGVELDPDRPARGLSIADQQIVEIAKALSFDARVLIMDEPTAALTGSEVARLFGVVRTLRDQGAAVLFISHRLEEIFHICARVTTLRDGAWIASEPLEGMTEDDLVRRMVGRDLDELYPKQEVTPGERALSVRRLTREGVFTDVSFEVRRGEIVALAGLVGAGRTEVARAVFGVDRWDAGEVEVDGKPLVNGAPSTAMAAGLALVPEDRRAQGLVMDMSIERNIGLTGLRTTVKAGLVDRGAERSRSLDWAVKLQVKYARIADTVATLSGGNQQKVVLAKWLATGPKVLIVDEPTRGIDVGTKAEVHRLLSQLAADGVAVLMISSDLPEVLGMADRVLVMHEGRLTAEISRTDATEETVMAAATGRAAA.

ABC transporter domains are found at residues 13–249 and 254–503; these read LALR…VGRD and YPKQ…TGRA. 45-52 lines the ATP pocket; that stretch reads GENGAGKS.

The protein belongs to the ABC transporter superfamily. Ribose importer (TC 3.A.1.2.1) family. In terms of assembly, the complex is composed of an ATP-binding protein (RbsA), two transmembrane proteins (RbsC) and a solute-binding protein (RbsB).

It is found in the cell membrane. It carries out the reaction D-ribose(out) + ATP + H2O = D-ribose(in) + ADP + phosphate + H(+). In terms of biological role, part of the ABC transporter complex RbsABC involved in ribose import. Responsible for energy coupling to the transport system. In Streptomyces coelicolor (strain ATCC BAA-471 / A3(2) / M145), this protein is Ribose import ATP-binding protein RbsA 1.